The primary structure comprises 140 residues: Protein ApaG (140 aa).

Positions 13 to 137 (EARTRDIVVR…FSLHLPGAAM (125 aa)) constitute an ApaG domain.

The chain is Protein ApaG from Caulobacter vibrioides (strain ATCC 19089 / CIP 103742 / CB 15) (Caulobacter crescentus).